The sequence spans 339 residues: MKDTEKKTEKELVWDECVDILENVKANSFKATLEYYLASDKKTKKAKPAKVKKVKEPKAKAVKPEQVKPTKTTKAPKPKKPKKQGGLISQWKEKLEAPYRTPYVEQKQGMVISIDKMWKHVHGEDSKEQIAILSDVSLEIGYGEIVIILGPSGSGKTTLLNLIGGYDSISLGSCVVANCPLEKCTTEQLLTYRKLNLGYVYQRYNLIELLSAYDNIAISQNLIPKEQRHLDIEELAAKLDIKEILYKFPYEMSGGQKQRVAIARAIIKEPRLLLCDEPTGALDSNSAENIIALLQAINKEYKQTILMVTHDETLTRIANRIIKISDGKIVSNELVRPLS.

Positions 41–87 are disordered; that stretch reads KKTKKAKPAKVKKVKEPKAKAVKPEQVKPTKTTKAPKPKKPKKQGGL. The segment covering 42-53 has biased composition (basic residues); it reads KTKKAKPAKVKK. Basic and acidic residues predominate over residues 54–68; the sequence is VKEPKAKAVKPEQVK. A compositionally biased stretch (basic residues) spans 74–83; it reads KAPKPKKPKK. Residues 112–338 form the ABC transporter domain; the sequence is ISIDKMWKHV…IVSNELVRPL (227 aa). 150-157 contributes to the ATP binding site; that stretch reads GPSGSGKT.

Belongs to the ABC transporter superfamily.

This Mycoplasma pneumoniae (strain ATCC 29342 / M129 / Subtype 1) (Mycoplasmoides pneumoniae) protein is Putative ABC transporter ATP-binding protein MG467 homolog.